Reading from the N-terminus, the 357-residue chain is Chorismate synthase (357 aa).

NADP(+) is bound at residue Arg46. FMN-binding positions include Arg123–Ser125, Asn235–Ala236, Gly275, Lys290–Ser294, and Arg316.

This sequence belongs to the chorismate synthase family. Homotetramer. FMNH2 is required as a cofactor.

It carries out the reaction 5-O-(1-carboxyvinyl)-3-phosphoshikimate = chorismate + phosphate. It participates in metabolic intermediate biosynthesis; chorismate biosynthesis; chorismate from D-erythrose 4-phosphate and phosphoenolpyruvate: step 7/7. Functionally, catalyzes the anti-1,4-elimination of the C-3 phosphate and the C-6 proR hydrogen from 5-enolpyruvylshikimate-3-phosphate (EPSP) to yield chorismate, which is the branch point compound that serves as the starting substrate for the three terminal pathways of aromatic amino acid biosynthesis. This reaction introduces a second double bond into the aromatic ring system. This Sulfurovum sp. (strain NBC37-1) protein is Chorismate synthase.